The chain runs to 535 residues: CTP synthase (535 aa).

An amidoligase domain region spans residues 1–268 (MPNKYIVVTG…VSKILSRLKL (268 aa)). Residue serine 14 coordinates CTP. Serine 14 is a binding site for UTP. An ATP-binding site is contributed by 15–20 (SVGKGT). Residue tyrosine 55 participates in L-glutamine binding. Aspartate 72 contacts ATP. The Mg(2+) site is built by aspartate 72 and glutamate 142. Residues 149-151 (DIE), 189-194 (KTKPLQ), and lysine 225 contribute to the CTP site. Residues 189–194 (KTKPLQ) and lysine 225 contribute to the UTP site. Position 243 (valine 243) interacts with ATP. The Glutamine amidotransferase type-1 domain occupies 302-535 (YTKLKDSYIS…LGFIRAVASL (234 aa)). Residue glycine 359 coordinates L-glutamine. The active-site Nucleophile; for glutamine hydrolysis is cysteine 386. Residues 387–390 (FGFQ), glutamate 410, and arginine 467 each bind L-glutamine. Catalysis depends on residues histidine 511 and glutamate 513.

Belongs to the CTP synthase family. As to quaternary structure, homotetramer in the presence of ATP and UTP. The enzyme dissociates into homodimers in the absence of substrate nucleotides.

The catalysed reaction is UTP + L-glutamine + ATP + H2O = CTP + L-glutamate + ADP + phosphate + 2 H(+). It catalyses the reaction L-glutamine + H2O = L-glutamate + NH4(+). The enzyme catalyses UTP + NH4(+) + ATP = CTP + ADP + phosphate + 2 H(+). Its pathway is pyrimidine metabolism; CTP biosynthesis via de novo pathway; CTP from UDP: step 2/2. Allosterically activated by GTP, when glutamine is the substrate; GTP has no effect on the reaction when ammonia is the substrate. The allosteric effector GTP functions by stabilizing the protein conformation that binds the tetrahedral intermediate(s) formed during glutamine hydrolysis. Inhibited by the product CTP, via allosteric rather than competitive inhibition. Its function is as follows. Catalyzes the ATP-dependent amination of UTP to CTP with either L-glutamine or ammonia as the source of nitrogen. Regulates intracellular CTP levels through interactions with the four ribonucleotide triphosphates. The chain is CTP synthase from Saccharolobus solfataricus (strain ATCC 35092 / DSM 1617 / JCM 11322 / P2) (Sulfolobus solfataricus).